Reading from the N-terminus, the 191-residue chain is Protein Ves (191 aa).

This sequence belongs to the Ves family.

The chain is Protein Ves from Escherichia coli (strain ATCC 8739 / DSM 1576 / NBRC 3972 / NCIMB 8545 / WDCM 00012 / Crooks).